Reading from the N-terminus, the 64-residue chain is Large ribosomal subunit protein uL30 (64 aa).

The protein belongs to the universal ribosomal protein uL30 family. As to quaternary structure, part of the 50S ribosomal subunit.

This Syntrophus aciditrophicus (strain SB) protein is Large ribosomal subunit protein uL30.